Reading from the N-terminus, the 850-residue chain is Envelope glycoprotein gp160 (850 aa).

The signal sequence occupies residues 1 to 28 (METQTSWLSLWRWGLMIFGMLMICSARE). Residues 29-678 (NLWVTVYYGV…ISNWLWYIKI (650 aa)) lie on the Extracellular side of the membrane. Cys50 and Cys70 are joined by a disulfide. N-linked (GlcNAc...) asparagine; by host glycans are attached at residues Asn84, Asn126, Asn133, Asn134, Asn139, Asn152, Asn156, Asn184, Asn193, Asn226, Asn230, Asn237, Asn258, Asn272, Asn285, Asn297, Asn327, Asn334, and Asn349. Disulfide bonds link Cys115–Cys201, Cys122–Cys192, Cys127–Cys153, Cys214–Cys243, and Cys224–Cys235. Positions 127–152 (CSDVNSNNSTDSNSSASNNSPEIMKN) are V1. A V2 region spans residues 153-192 (CSFNVTTEIRNKRKQEYALFYRQDVVPINSDNKSYILINC). Residues 292–325 (CTRPNNNTRKGIHMGPGQVLYATGEIIGDIRKAY) form a V3 region. A disulfide bridge connects residues Cys292 and Cys326. The CD4-binding loop stretch occupies residues 357 to 367 (PSGGDIEITTH). Disulfide bonds link Cys371–Cys436 and Cys378–Cys409. Positions 378–409 (CNTSTLFNSSWDENNIKDTNSTNDNTTITIPC) are V4. 8 N-linked (GlcNAc...) asparagine; by host glycosylation sites follow: Asn379, Asn385, Asn397, Asn402, Asn433, Asn439, Asn453, and Asn457. Positions 447–467 (RDGGNRNGSENGTETFRPTGG) are disordered. Residues 453-462 (NGSENGTETF) show a composition bias toward polar residues. V5 regions lie at residues 453 to 465 (NGSE…FRPT) and 454 to 465 (GSENGTETFRPT). The fusion peptide stretch occupies residues 506 to 526 (AVGIGAVFLGFLGTAGSTMGA). Positions 568 to 586 (KQLQARVLAVERYLKDQQL) are immunosuppression. Cys592 and Cys598 are disulfide-bonded. 5 N-linked (GlcNAc...) asparagine; by host glycosylation sites follow: Asn605, Asn610, Asn619, Asn631, and Asn668. A coiled-coil region spans residues 627–661 (REINNYTGIIYSLIEEAQNQQETNEKDLLALDKWT). The interval 656 to 677 (ALDKWTNLWNWFNISNWLWYIK) is MPER; binding to GalCer. The chain crosses the membrane as a helical span at residues 679–699 (FIMIIGGLIGLRIIFAVLAIV). The Cytoplasmic segment spans residues 700 to 850 (NRVRQGYSPL…IRQGLERALL (151 aa)). The YXXL motif; contains endocytosis signal signature appears at 706-709 (YSPL). Residue Cys758 is the site of S-palmitoyl cysteine; by host attachment. The short motif at 849 to 850 (LL) is the Di-leucine internalization motif element.

This sequence belongs to the HIV-1 env protein family. In terms of assembly, the mature envelope protein (Env) consists of a homotrimer of non-covalently associated gp120-gp41 heterodimers. The resulting complex protrudes from the virus surface as a spike. There seems to be as few as 10 spikes on the average virion. Interacts with host CD4, CCR5 and CXCR4. Gp120 also interacts with the C-type lectins CD209/DC-SIGN and CLEC4M/DC-SIGNR (collectively referred to as DC-SIGN(R)). Gp120 and gp41 interact with GalCer. Gp120 interacts with host ITGA4/ITGB7 complex; on CD4+ T-cells, this interaction results in rapid activation of integrin ITGAL/LFA-1, which facilitates efficient cell-to-cell spreading of HIV-1. Gp120 interacts with cell-associated heparan sulfate; this interaction increases virus infectivity on permissive cells and may be involved in infection of CD4- cells. As to quaternary structure, the mature envelope protein (Env) consists of a homotrimer of non-covalently associated gp120-gp41 heterodimers. The resulting complex protrudes from the virus surface as a spike. There seems to be as few as 10 spikes on the average virion. Highly glycosylated by host. The high number of glycan on the protein is reffered to as 'glycan shield' because it contributes to hide protein sequence from adaptive immune system. Post-translationally, palmitoylation of the transmembrane protein and of Env polyprotein (prior to its proteolytic cleavage) is essential for their association with host cell membrane lipid rafts. Palmitoylation is therefore required for envelope trafficking to classical lipid rafts, but not for viral replication. In terms of processing, specific enzymatic cleavages in vivo yield mature proteins. Envelope glycoproteins are synthesized as an inactive precursor that is heavily N-glycosylated and processed likely by host cell furin in the Golgi to yield the mature SU and TM proteins. The cleavage site between SU and TM requires the minimal sequence [KR]-X-[KR]-R. About 2 of the 9 disulfide bonds of gp41 are reduced by P4HB/PDI, following binding to CD4 receptor.

The protein localises to the virion membrane. The protein resides in the host cell membrane. It localises to the host endosome membrane. Functionally, oligomerizes in the host endoplasmic reticulum into predominantly trimers. In a second time, gp160 transits in the host Golgi, where glycosylation is completed. The precursor is then proteolytically cleaved in the trans-Golgi and thereby activated by cellular furin or furin-like proteases to produce gp120 and gp41. In terms of biological role, attaches the virus to the host lymphoid cell by binding to the primary receptor CD4. This interaction induces a structural rearrangement creating a high affinity binding site for a chemokine coreceptor like CXCR4 and/or CCR5. Acts as a ligand for CD209/DC-SIGN and CLEC4M/DC-SIGNR, which are respectively found on dendritic cells (DCs), and on endothelial cells of liver sinusoids and lymph node sinuses. These interactions allow capture of viral particles at mucosal surfaces by these cells and subsequent transmission to permissive cells. HIV subverts the migration properties of dendritic cells to gain access to CD4+ T-cells in lymph nodes. Virus transmission to permissive T-cells occurs either in trans (without DCs infection, through viral capture and transmission), or in cis (following DCs productive infection, through the usual CD4-gp120 interaction), thereby inducing a robust infection. In trans infection, bound virions remain infectious over days and it is proposed that they are not degraded, but protected in non-lysosomal acidic organelles within the DCs close to the cell membrane thus contributing to the viral infectious potential during DCs' migration from the periphery to the lymphoid tissues. On arrival at lymphoid tissues, intact virions recycle back to DCs' cell surface allowing virus transmission to CD4+ T-cells. Its function is as follows. Acts as a class I viral fusion protein. Under the current model, the protein has at least 3 conformational states: pre-fusion native state, pre-hairpin intermediate state, and post-fusion hairpin state. During fusion of viral and target intracellular membranes, the coiled coil regions (heptad repeats) assume a trimer-of-hairpins structure, positioning the fusion peptide in close proximity to the C-terminal region of the ectodomain. The formation of this structure appears to drive apposition and subsequent fusion of viral and target cell membranes. Complete fusion occurs in host cell endosomes and is dynamin-dependent, however some lipid transfer might occur at the plasma membrane. The virus undergoes clathrin-dependent internalization long before endosomal fusion, thus minimizing the surface exposure of conserved viral epitopes during fusion and reducing the efficacy of inhibitors targeting these epitopes. Membranes fusion leads to delivery of the nucleocapsid into the cytoplasm. This Human immunodeficiency virus type 1 group M subtype J (isolate SE9173) (HIV-1) protein is Envelope glycoprotein gp160.